An 85-amino-acid chain; its full sequence is Antibacterial factor-related peptide 2 (85 aa).

The first 17 residues, 1–17 (MFVRSLFLALLLATIVA), serve as a signal peptide directing secretion. The propeptide occupies 82-85 (IKRG).

In terms of tissue distribution, expressed in the pharynx (at protein level). Detected in pharyngeal neurons and secretory cells.

The protein resides in the secreted. Exhibits antimicrobial activity against the Gram-positive bacteria B.subtilis IFO 3134, K.varians MAFF 118076 and S.aureus ATCC 6538P, the Gram-negative bacteria A.tumefaciens MAFF 1001, B.bacteriovorus MAFF 106101 and K.pneumoniae MAFF 519002, and the yeasts C.krusei MAFF 114085, K.thermotolerans MAFF 113848 and T.delbrueckii MAFF 113811. The chain is Antibacterial factor-related peptide 2 from Caenorhabditis elegans.